We begin with the raw amino-acid sequence, 281 residues long: Putative dehydrogenase/reductase SDR family member 4-like 1 (281 aa).

36-60 (LVTASTDWIGFAVAQRLAQDGAHVV) is a binding site for NADP(+). Residue Ser-172 coordinates substrate. Tyr-185 serves as the catalytic Proton acceptor. Residue Lys-189 participates in NADP(+) binding. The Peroxisomal targeting signal motif lies at 279–281 (SRL).

The protein belongs to the short-chain dehydrogenases/reductases (SDR) family.

In terms of biological role, putative oxidoreductase. The protein is Putative dehydrogenase/reductase SDR family member 4-like 1 of Homo sapiens (Human).